The chain runs to 59 residues: Large ribosomal subunit protein bL32 (59 aa).

The disordered stretch occupies residues 1 to 25; the sequence is MAVQQNKKSPSKRGMHRAHDFLTAP.

The protein belongs to the bacterial ribosomal protein bL32 family.

In Azoarcus sp. (strain BH72), this protein is Large ribosomal subunit protein bL32.